The chain runs to 143 residues: MSPQTETKASVGFKAGVKEYKLNYYTPDYDTKDTDILAAFRVSPQPGVPPEEAGAAVAAESSTGTWTTVWTDGLTSLDRYKGRCYQIEPVAGEENQFIAYVAYPLDLFEEGSVTNMLTSIVGXVFGFKALCALRLEDLRIPPA.

The propeptide occupies M1–S2. P3 bears the N-acetylproline mark. N6,N6,N6-trimethyllysine is present on K14. Position 123 (X123) interacts with substrate.

The protein belongs to the RuBisCO large chain family. Type I subfamily. As to quaternary structure, heterohexadecamer of 8 large chains and 8 small chains.

It localises to the plastid. Its subcellular location is the chloroplast. It catalyses the reaction 2 (2R)-3-phosphoglycerate + 2 H(+) = D-ribulose 1,5-bisphosphate + CO2 + H2O. The catalysed reaction is D-ribulose 1,5-bisphosphate + O2 = 2-phosphoglycolate + (2R)-3-phosphoglycerate + 2 H(+). Functionally, ruBisCO catalyzes two reactions: the carboxylation of D-ribulose 1,5-bisphosphate, the primary event in carbon dioxide fixation, as well as the oxidative fragmentation of the pentose substrate in the photorespiration process. Both reactions occur simultaneously and in competition at the same active site. The protein is Ribulose bisphosphate carboxylase large chain (rbcL) of Nemopanthus mucronatus (Catberry).